The sequence spans 125 residues: Neuropeptide B (125 aa).

The signal sequence occupies residues 1–24; it reads MARSATLAAAALALCLLLAPPGLA. A disordered region spans residues 54-73; that stretch reads RRSQPYRGAEPPGGAGASPE. Residues 56–125 constitute a propeptide that is removed on maturation; the sequence is SQPYRGAEPP…SLRAADCLAA (70 aa).

The protein belongs to the neuropeptide B/W family. As to expression, widely expressed in the central nervous system. High levels are found in substantia nigra, hypothalamus, hippocampus, spinal cord, placenta and fetal brain; lower levels are found in testis, uterus and ovary. Also detected at high levels in colorectal adenocarcinoma.

Its subcellular location is the secreted. May be involved in the regulation of feeding, neuroendocrine system, memory, learning and in the afferent pain pathway. This is Neuropeptide B (NPB) from Homo sapiens (Human).